An 804-amino-acid chain; its full sequence is Leucine--tRNA ligase (804 aa).

The short motif at 39-50 is the 'HIGH' region element; it reads PYPSGAGLHVGH. Residues 580-584 carry the 'KMSKS' region motif; the sequence is KMSKS. Lys-583 is an ATP binding site.

This sequence belongs to the class-I aminoacyl-tRNA synthetase family.

It is found in the cytoplasm. The enzyme catalyses tRNA(Leu) + L-leucine + ATP = L-leucyl-tRNA(Leu) + AMP + diphosphate. The chain is Leucine--tRNA ligase from Mycoplasma mycoides subsp. mycoides SC (strain CCUG 32753 / NCTC 10114 / PG1).